Reading from the N-terminus, the 404-residue chain is Keratin, type I microfibrillar, 47.6 kDa (404 aa).

The tract at residues 1–56 (MSFNFCLPNLSFRSSCSSRPCVPSSCCGTTLPGACNIPASVGSCNWFCEGSFNGNE) is head. The region spanning 56 to 367 (EKETMQFLND…GLLDSEDCKL (312 aa)) is the IF rod domain. Residues 57–91 (KETMQFLNDRLASYLEKVRQLERENAELERRILER) are coil 1A. Residues 92–102 (SQQQEPLVCPN) are linker 1. The segment at 103 to 203 (YQSYFRTIEE…HEQEVNTLRS (101 aa)) is coil 1B. The segment at 204–219 (QLGDRLNVEVDAAPTV) is linker 12. Positions 220-363 (DLNHVLNETR…NTYRGLLDSE (144 aa)) are coil 2. Positions 364–404 (DCKLPCNPCATTNTCGKPIGPCISNPCVSRTRCGPCNTFVH) are tail.

It belongs to the intermediate filament family.

Functionally, wool microfibrillar keratin. This is Keratin, type I microfibrillar, 47.6 kDa from Ovis aries (Sheep).